The following is a 133-amino-acid chain: Profilin (133 aa).

This sequence belongs to the profilin family. In terms of assembly, interacts with host TPM1. Interacts with protein A25.

Its subcellular location is the host cytoplasm. Its function is as follows. Participates in either intracellular transport of viral proteins or intercellular spread of the virus. Cellular profilins modulate actin filament dynamics (polymerization and depolymerization) via direct binding to actin through an actin-binding domain as well as by modulation of other actin-binding proteins. In contrast to cellular homologs, the poxvirus profilins seem to bind actin only weakly. The polypeptide is Profilin (OPG171) (Variola virus (isolate Human/India/Ind3/1967) (VARV)).